A 256-amino-acid chain; its full sequence is DNA repair protein RecO (256 aa).

The protein belongs to the RecO family.

Its function is as follows. Involved in DNA repair and RecF pathway recombination. The chain is DNA repair protein RecO from Shouchella clausii (strain KSM-K16) (Alkalihalobacillus clausii).